The chain runs to 712 residues: Capsid protein (712 aa).

Disordered stretches follow at residues 614 to 633 and 646 to 665; these read LTST…KEVR and CWMS…PESS. Positions 670–706 form a coiled coil; the sequence is YDNHTKLAKRVKKEIHNQNRRHRLLLAHLRRERDRLL.

This sequence belongs to the anelloviridae capsid protein family.

It is found in the virion. Functionally, self-assembles to form an icosahedral capsid with a T=1 symmetry, about 30 nm in diameter, and consisting of 60 capsid proteins. The capsid encapsulates the genomic DNA. Capsid protein is involved in attachment and entry into the host cell. This Torque teno tamarin virus (isolate So-TTV2) protein is Capsid protein.